The primary structure comprises 311 residues: Cbb3-type cytochrome c oxidase subunit CcoP1 (311 aa).

The next 2 helical transmembrane spans lie at 4 to 24 and 56 to 76; these read FWSG…FWLI and RWWF…LVLY. 2 consecutive Cytochrome c domains span residues 130–209 and 220–302; these read QAVK…RKDL and ADLS…YSLS. Heme c-binding residues include cysteine 143, cysteine 146, histidine 147, methionine 186, cysteine 233, cysteine 236, histidine 237, and methionine 279.

Belongs to the CcoP / FixP family. As to quaternary structure, component of the cbb3-type cytochrome c oxidase at least composed of CcoN, CcoO, CcoQ and CcoP. Requires heme c as cofactor.

Its subcellular location is the cell inner membrane. Its pathway is energy metabolism; oxidative phosphorylation. C-type cytochrome. Part of the cbb3-type cytochrome c oxidase complex. CcoP subunit is required for transferring electrons from donor cytochrome c via its heme groups to CcoO subunit. From there, electrons are shuttled to the catalytic binuclear center of CcoN subunit where oxygen reduction takes place. The complex also functions as a proton pump. In Stutzerimonas stutzeri (Pseudomonas stutzeri), this protein is Cbb3-type cytochrome c oxidase subunit CcoP1.